The chain runs to 943 residues: Isoleucine--tRNA ligase (943 aa).

Positions 58 to 68 (PYANGSIHIGH) match the 'HIGH' region motif. Position 567 (Glu567) interacts with L-isoleucyl-5'-AMP. A 'KMSKS' region motif is present at residues 608–612 (KMSKS). Lys611 contacts ATP. 4 residues coordinate Zn(2+): Cys906, Cys909, Cys926, and Cys929.

This sequence belongs to the class-I aminoacyl-tRNA synthetase family. IleS type 1 subfamily. As to quaternary structure, monomer. Zn(2+) serves as cofactor.

Its subcellular location is the cytoplasm. It catalyses the reaction tRNA(Ile) + L-isoleucine + ATP = L-isoleucyl-tRNA(Ile) + AMP + diphosphate. Its function is as follows. Catalyzes the attachment of isoleucine to tRNA(Ile). As IleRS can inadvertently accommodate and process structurally similar amino acids such as valine, to avoid such errors it has two additional distinct tRNA(Ile)-dependent editing activities. One activity is designated as 'pretransfer' editing and involves the hydrolysis of activated Val-AMP. The other activity is designated 'posttransfer' editing and involves deacylation of mischarged Val-tRNA(Ile). This Pseudomonas aeruginosa (strain UCBPP-PA14) protein is Isoleucine--tRNA ligase.